A 363-amino-acid polypeptide reads, in one-letter code: UDP-N-acetylglucosamine--N-acetylmuramyl-(pentapeptide) pyrophosphoryl-undecaprenol N-acetylglucosamine transferase (363 aa).

UDP-N-acetyl-alpha-D-glucosamine contacts are provided by residues 21-23 (TGG), asparagine 129, arginine 170, serine 196, and glutamine 290.

It belongs to the glycosyltransferase 28 family. MurG subfamily.

It is found in the cell inner membrane. The catalysed reaction is di-trans,octa-cis-undecaprenyl diphospho-N-acetyl-alpha-D-muramoyl-L-alanyl-D-glutamyl-meso-2,6-diaminopimeloyl-D-alanyl-D-alanine + UDP-N-acetyl-alpha-D-glucosamine = di-trans,octa-cis-undecaprenyl diphospho-[N-acetyl-alpha-D-glucosaminyl-(1-&gt;4)]-N-acetyl-alpha-D-muramoyl-L-alanyl-D-glutamyl-meso-2,6-diaminopimeloyl-D-alanyl-D-alanine + UDP + H(+). Its pathway is cell wall biogenesis; peptidoglycan biosynthesis. In terms of biological role, cell wall formation. Catalyzes the transfer of a GlcNAc subunit on undecaprenyl-pyrophosphoryl-MurNAc-pentapeptide (lipid intermediate I) to form undecaprenyl-pyrophosphoryl-MurNAc-(pentapeptide)GlcNAc (lipid intermediate II). This Synechococcus sp. (strain ATCC 27144 / PCC 6301 / SAUG 1402/1) (Anacystis nidulans) protein is UDP-N-acetylglucosamine--N-acetylmuramyl-(pentapeptide) pyrophosphoryl-undecaprenol N-acetylglucosamine transferase.